The primary structure comprises 691 residues: Elongation factor G (691 aa).

The region spanning 6–281 is the tr-type G domain; it reads SRYRNIGIMA…GVVDFLPSPI (276 aa). Residues 15–22, 79–83, and 133–136 each bind GTP; these read AHIDAGKT, DTPGH, and NKMD.

It belongs to the TRAFAC class translation factor GTPase superfamily. Classic translation factor GTPase family. EF-G/EF-2 subfamily.

It is found in the cytoplasm. Functionally, catalyzes the GTP-dependent ribosomal translocation step during translation elongation. During this step, the ribosome changes from the pre-translocational (PRE) to the post-translocational (POST) state as the newly formed A-site-bound peptidyl-tRNA and P-site-bound deacylated tRNA move to the P and E sites, respectively. Catalyzes the coordinated movement of the two tRNA molecules, the mRNA and conformational changes in the ribosome. This is Elongation factor G from Wolbachia pipientis subsp. Culex pipiens (strain wPip).